The chain runs to 301 residues: Syntaxin-17 (301 aa).

Residue S2 is modified to N-acetylserine. The Cytoplasmic portion of the chain corresponds to 2–227; it reads SEDEEKVKLR…KNLQKAAKYK (226 aa). K41 carries the N6-acetyllysine modification. Residues 49–128 adopt a coiled-coil conformation; that stretch reads DKLHEEHINA…QVNDEELLQP (80 aa). Phosphotyrosine; by ABL1 is present on Y156. The t-SNARE coiled-coil homology domain occupies 161–223; it reads IPQDQNAAES…EEGTKNLQKA (63 aa). The helical transmembrane segment at 228 to 248 threads the bilayer; sequence LAALPVAGALIGGVVGGPIGL. The segment at 228 to 274 is necessary and sufficient for localization to autophagosome; the sequence is LAALPVAGALIGGVVGGPIGLLAGFKVAGIAAALGGGVLGFTGGKLI. Over 249-253 the chain is Lumenal; the sequence is LAGFK. Residues 254 to 274 traverse the membrane as a helical segment; it reads VAGIAAALGGGVLGFTGGKLI. The Cytoplasmic portion of the chain corresponds to 275–301; that stretch reads QRRKQKMMEKLTSSCPDLPSQSDKKRS. S288 carries the phosphoserine modification. An Endoplasmic reticulum retention signal motif is present at residues 298 to 301; the sequence is KKRS.

It belongs to the syntaxin family. Forms a SNARE complex composed of VAMP8, SNAP29 and STX17 involved in fusion of autophagosome with lysosome. May interact with VTI1B. Probably interacts with BET1, SCFD1 and SEC22B. Interacts with PTPN2 and ABL1; involved in STX17 phosphorylation. Interacts with COPB1. Interacts with TMED9 and TMED10; the interaction is direct. Interacts with VAMP7. Interacts with RUBCNL/PACER; promoting targeting of RUBCNL/PACER to autophagosome. Interacts with VAMP8, SNAP29, VPS39 and VPS41; these interactions are increased in the absence of TMEM39A. Interacts with IRGM; promoting STX17 recruitment to autophagosomes. Interacts with ATG8 proteins GABARAP and MAP1LC3B. Interacts with RNF115; this interaction enhances STX17 stability which in turn promotes autophagosome maturation. Interacts with RAB39A (GTP-bound); the interaction promotes autophagosome-lysosome membrane fusion driven by STX17-SNAP29-VAMP8. Interacts with RAB39B; the interaction may promote a different fonction in autophagy as compared with RAB39A. In terms of processing, dephosphorylation by PTPN2; regulates exit from the endoplasmic reticulum. Phosphorylated at Tyr-156 probably by ABL1.

It localises to the endoplasmic reticulum membrane. It is found in the smooth endoplasmic reticulum membrane. The protein resides in the endoplasmic reticulum-Golgi intermediate compartment membrane. Its subcellular location is the cytoplasmic vesicle. The protein localises to the autophagosome membrane. It localises to the COPII-coated vesicle membrane. It is found in the cytoplasm. The protein resides in the cytosol. Its subcellular location is the mitochondrion membrane. The protein localises to the autolysosome membrane. In terms of biological role, SNAREs, soluble N-ethylmaleimide-sensitive factor-attachment protein receptors, are essential proteins for fusion of cellular membranes. SNAREs localized on opposing membranes assemble to form a trans-SNARE complex, an extended, parallel four alpha-helical bundle that drives membrane fusion. STX17 is a SNARE of the autophagosome involved in autophagy through the direct control of autophagosome membrane fusion with the lysosome membrane. May also play a role in the early secretory pathway where it may maintain the architecture of the endoplasmic reticulum-Golgi intermediate compartment/ERGIC and Golgi and/or regulate transport between the endoplasmic reticulum, the ERGIC and the Golgi. This is Syntaxin-17 from Mus musculus (Mouse).